The sequence spans 53 residues: ATP synthase protein 8 (53 aa).

The chain crosses the membrane as a helical span at residues 9-29; sequence WITSMLMFWISVSILFSTLWW.

This sequence belongs to the ATPase protein 8 family. As to quaternary structure, F-type ATPases have 2 components, CF(1) - the catalytic core - and CF(0) - the membrane proton channel.

The protein resides in the mitochondrion membrane. Mitochondrial membrane ATP synthase (F(1)F(0) ATP synthase or Complex V) produces ATP from ADP in the presence of a proton gradient across the membrane which is generated by electron transport complexes of the respiratory chain. F-type ATPases consist of two structural domains, F(1) - containing the extramembraneous catalytic core and F(0) - containing the membrane proton channel, linked together by a central stalk and a peripheral stalk. During catalysis, ATP synthesis in the catalytic domain of F(1) is coupled via a rotary mechanism of the central stalk subunits to proton translocation. Part of the complex F(0) domain. Minor subunit located with subunit a in the membrane. In Lumbricus terrestris (Common earthworm), this protein is ATP synthase protein 8 (MT-ATP8).